We begin with the raw amino-acid sequence, 248 residues long: Triosephosphate isomerase (248 aa).

9-11 (NWK) is a binding site for substrate. H94 serves as the catalytic Electrophile. The Proton acceptor role is filled by E166. Substrate is bound by residues G172, S212, and 233-234 (GG).

It belongs to the triosephosphate isomerase family. As to quaternary structure, homodimer.

The protein resides in the cytoplasm. It catalyses the reaction D-glyceraldehyde 3-phosphate = dihydroxyacetone phosphate. It functions in the pathway carbohydrate biosynthesis; gluconeogenesis. It participates in carbohydrate degradation; glycolysis; D-glyceraldehyde 3-phosphate from glycerone phosphate: step 1/1. Involved in the gluconeogenesis. Catalyzes stereospecifically the conversion of dihydroxyacetone phosphate (DHAP) to D-glyceraldehyde-3-phosphate (G3P). The protein is Triosephosphate isomerase of Clostridium botulinum (strain ATCC 19397 / Type A).